A 142-amino-acid chain; its full sequence is Hemoglobin subunit alpha (142 aa).

Residue S1 is modified to N-acetylserine. The 142-residue stretch at 1-142 folds into the Globin domain; sequence SLSDKDKAAV…VALALAERYR (142 aa). H59 serves as a coordination point for O2. Position 88 (H88) interacts with heme b.

Belongs to the globin family. In terms of assembly, hb1 is a heterotetramer of two alpha chains and two beta chains. HbC is a heterotetramer of two alpha chains and two beta-C chains. As to expression, red blood cells.

Functionally, involved in oxygen transport from gills to the various peripheral tissues. In Trematomus bernacchii (Emerald rockcod), this protein is Hemoglobin subunit alpha (hba).